The chain runs to 827 residues: Cadherin-17 (827 aa).

Residues M1–G21 form the signal peptide. The Extracellular segment spans residues Q22–M786. 7 Cadherin domains span residues P29–Q127, T128–P243, V244–C339, L340–F448, E449–F565, P566–L666, and A667–G776. N148, N183, N249, N418, N545, N573, and N721 each carry an N-linked (GlcNAc...) asparagine glycan. The chain crosses the membrane as a helical span at residues A787 to I807. The Cytoplasmic portion of the chain corresponds to R808 to S827.

Liver and intestine.

The protein localises to the cell membrane. Its function is as follows. Cadherins are calcium-dependent cell adhesion proteins. They preferentially interact with themselves in a homophilic manner in connecting cells; cadherins may thus contribute to the sorting of heterogeneous cell types. LI-cadherin may have a role in the morphological organization of liver and intestine. The protein is Cadherin-17 (Cdh17) of Rattus norvegicus (Rat).